The primary structure comprises 482 residues: tRNA sulfurtransferase (482 aa).

One can recognise a THUMP domain in the interval 61–165; that stretch reads LAIRDALTRI…DDRLLLIKGR (105 aa). ATP-binding positions include 183–184, K265, G287, and Q296; that span reads LI. An intrachain disulfide couples C344 to C456. The Rhodanese domain occupies 404 to 482; that stretch reads FGPNDVILDI…GFNNVKVYRP (79 aa). C456 (cysteine persulfide intermediate) is an active-site residue.

It belongs to the ThiI family.

The protein localises to the cytoplasm. The catalysed reaction is [ThiI sulfur-carrier protein]-S-sulfanyl-L-cysteine + a uridine in tRNA + 2 reduced [2Fe-2S]-[ferredoxin] + ATP + H(+) = [ThiI sulfur-carrier protein]-L-cysteine + a 4-thiouridine in tRNA + 2 oxidized [2Fe-2S]-[ferredoxin] + AMP + diphosphate. It catalyses the reaction [ThiS sulfur-carrier protein]-C-terminal Gly-Gly-AMP + S-sulfanyl-L-cysteinyl-[cysteine desulfurase] + AH2 = [ThiS sulfur-carrier protein]-C-terminal-Gly-aminoethanethioate + L-cysteinyl-[cysteine desulfurase] + A + AMP + 2 H(+). It functions in the pathway cofactor biosynthesis; thiamine diphosphate biosynthesis. In terms of biological role, catalyzes the ATP-dependent transfer of a sulfur to tRNA to produce 4-thiouridine in position 8 of tRNAs, which functions as a near-UV photosensor. Also catalyzes the transfer of sulfur to the sulfur carrier protein ThiS, forming ThiS-thiocarboxylate. This is a step in the synthesis of thiazole, in the thiamine biosynthesis pathway. The sulfur is donated as persulfide by IscS. In Escherichia coli O9:H4 (strain HS), this protein is tRNA sulfurtransferase.